Consider the following 604-residue polypeptide: Nuclear factor erythroid 2-related factor 2 (604 aa).

The DLG motif signature appears at Asp29–Gly31. Ser40 is subject to Phosphoserine; by PKC. The short motif at Glu79–Glu82 is the ETGE motif element. Position 214 is a phosphoserine (Ser214). The disordered stretch occupies residues Thr334–Ser447. 2 stretches are compositionally biased toward polar residues: residues Ser340–Arg352 and Pro395–Ser407. Lys461, Lys471, and Lys486 each carry an N-linked (Glc) (glycation) lysine glycan. A bZIP domain is found at Leu496–Leu559. N-linked (Glc) (glycation) arginine glycosylation occurs at Arg498. The tract at residues Arg498 to Lys517 is basic motif. Residues Ile521–Leu528 form a leucine-zipper region. A glycan (N-linked (Glc) (glycation) arginine) is linked at Arg568. The interval Glu570–Asn604 is disordered. Lys573 is a glycosylation site (N-linked (Glc) (glycation) lysine). A compositionally biased stretch (polar residues) spans Ser578–Asp587. A mediates interaction with CHD6 and is necessary to activate transcription region spans residues Val590–Lys595. N6-acetyllysine; by CREBBP occurs at positions 595 and 598.

Belongs to the bZIP family. CNC subfamily. In terms of assembly, heterodimer; heterodimerizes with small Maf proteins. Interacts (via the bZIP domain) with MAFG and MAFK; required for binding to antioxidant response elements (AREs) on DNA. Interacts with KEAP1; the interaction is direct and promotes ubiquitination by the BCR(KEAP1) E3 ubiquitin ligase complex. Forms a ternary complex with PGAM5 and KEAP1. Interacts with EEF1D at heat shock promoter elements (HSE). Interacts via its leucine-zipper domain with the coiled-coil domain of PMF1. Interacts with CHD6; involved in activation of the transcription. Interacts with ESRRB; represses NFE2L2 transcriptional activity. Interacts with MOTS-c, a peptide produced by the mitochondrially encoded 12S rRNA MT-RNR1; the interaction occurs in the nucleus following metabolic stress. Post-translationally, ubiquitinated in the cytoplasm by the BCR(KEAP1) E3 ubiquitin ligase complex leading to its degradation. In response to oxidative stress, electrophile metabolites, such as sulforaphane, modify KEAP1, leading to inhibit activity of the BCR(KEAP1) complex, promoting NFE2L2/NRF2 nuclear accumulation and activity. In response to autophagy, the BCR(KEAP1) complex is inactivated. Phosphorylated by EIF2AK3/PERK following unfolded protein response (UPR), promoting dissociation from its cytoplasmic inhibitor KEAP1, followed by its translocation into the nucleus. Phosphorylation of Ser-40 by PKC in response to oxidative stress dissociates NFE2L2 from its cytoplasmic inhibitor KEAP1, promoting its translocation into the nucleus. In terms of processing, acetylation at Lys-595 and Lys-598 increases nuclear localization whereas deacetylation by SIRT1 enhances cytoplasmic presence. Post-translationally, glycation impairs transcription factor activity by preventing heterodimerization with small Maf proteins. Deglycation by FN3K restores activity.

It localises to the cytoplasm. Its subcellular location is the cytosol. The protein localises to the nucleus. In terms of biological role, transcription factor that plays a key role in the response to oxidative stress: binds to antioxidant response (ARE) elements present in the promoter region of many cytoprotective genes, such as phase 2 detoxifying enzymes, and promotes their expression, thereby neutralizing reactive electrophiles. In normal conditions, ubiquitinated and degraded in the cytoplasm by the BCR(KEAP1) complex. In response to oxidative stress, electrophile metabolites inhibit activity of the BCR(KEAP1) complex, promoting nuclear accumulation of NFE2L2/NRF2, heterodimerization with one of the small Maf proteins and binding to ARE elements of cytoprotective target genes. The NFE2L2/NRF2 pathway is also activated in response to selective autophagy: autophagy promotes interaction between KEAP1 and SQSTM1/p62 and subsequent inactivation of the BCR(KEAP1) complex, leading to NFE2L2/NRF2 nuclear accumulation and expression of cytoprotective genes. The NFE2L2/NRF2 pathway is also activated during the unfolded protein response (UPR), contributing to redox homeostasis and cell survival following endoplasmic reticulum stress. May also be involved in the transcriptional activation of genes of the beta-globin cluster by mediating enhancer activity of hypersensitive site 2 of the beta-globin locus control region. Also plays an important role in the regulation of the innate immune response. It is a critical regulator of the innate immune response and survival during sepsis by maintaining redox homeostasis and restraint of the dysregulation of pro-inflammatory signaling pathways like MyD88-dependent and -independent and TNF-alpha signaling. Suppresses macrophage inflammatory response by blocking pro-inflammatory cytokine transcription and the induction of IL6. Binds to the proximity of pro-inflammatory genes in macrophages and inhibits RNA Pol II recruitment. The inhibition is independent of the Nrf2-binding motif and reactive oxygen species level. Represses antiviral cytosolic DNA sensing by suppressing the expression of the adapter protein STING1 and decreasing responsiveness to STING1 agonists while increasing susceptibility to infection with DNA viruses. The sequence is that of Nuclear factor erythroid 2-related factor 2 from Rattus norvegicus (Rat).